The following is a 130-amino-acid chain: Flagellar assembly factor FliW (130 aa).

Belongs to the FliW family. In terms of assembly, interacts with translational regulator CsrA and flagellin(s).

It is found in the cytoplasm. Functionally, acts as an anti-CsrA protein, binds CsrA and prevents it from repressing translation of its target genes, one of which is flagellin. Binds to flagellin and participates in the assembly of the flagellum. In Borrelia hermsii (strain HS1 / DAH), this protein is Flagellar assembly factor FliW.